Here is a 341-residue protein sequence, read N- to C-terminus: Heat-inducible transcription repressor HrcA (341 aa).

This sequence belongs to the HrcA family.

Its function is as follows. Negative regulator of class I heat shock genes (grpE-dnaK-dnaJ and groELS operons). Prevents heat-shock induction of these operons. This Corynebacterium jeikeium (strain K411) protein is Heat-inducible transcription repressor HrcA.